A 652-amino-acid polypeptide reads, in one-letter code: Small ribosomal subunit protein mS39 (652 aa).

The N-terminal 37 residues, 1-37 (MYLSRQLRLLPRANIACSLSSSGAHYTTAAPAEDAPI), are a transit peptide targeting the mitochondrion. PPR repeat units lie at residues 129–163 (DSVVDETSLAQLISQGELKDAVLVYNLLEQKGNPI), 225–259 (TPQSYASLIRGMAKYLQCERAYALLQEAGEKQVQL), 260–299 (DTNTFNSVIEIVSFLKDTAEQRWQLCKDLLNEMSQQKLRP), 300–338 (NLGTLNAVLQCISTFGNFKVARAAALQALPEFKQLGVNP), and 547–581 (TGQMLGDILTLLVRGGSYEKATEVFAHIDKNQHRI).

This sequence belongs to the mitochondrion-specific ribosomal protein mS39 family.

It is found in the mitochondrion. Functionally, mitochondrial protein that may have a role in mitochondrial translation. Essential for larval development. In Drosophila melanogaster (Fruit fly), this protein is Small ribosomal subunit protein mS39.